The chain runs to 445 residues: Probable aminotransferase TAT3 (445 aa).

This sequence belongs to the class-I pyridoxal-phosphate-dependent aminotransferase family. Pyridoxal 5'-phosphate serves as cofactor. Expressed in roots, leaves and cauline leaves.

The protein is Probable aminotransferase TAT3 (TAT3) of Arabidopsis thaliana (Mouse-ear cress).